The chain runs to 218 residues: Histidine biosynthesis bifunctional protein HisIE (218 aa).

Residues 1–131 (MAPHQFKSKG…GDYDLPPADT (131 aa)) form a phosphoribosyl-AMP cyclohydrolase region. The interval 132 to 218 (LSQVFRVVEE…VYRALQQRRR (87 aa)) is phosphoribosyl-ATP pyrophosphohydrolase.

The protein in the N-terminal section; belongs to the PRA-CH family. In the C-terminal section; belongs to the PRA-PH family.

Its subcellular location is the cytoplasm. The catalysed reaction is 1-(5-phospho-beta-D-ribosyl)-ATP + H2O = 1-(5-phospho-beta-D-ribosyl)-5'-AMP + diphosphate + H(+). The enzyme catalyses 1-(5-phospho-beta-D-ribosyl)-5'-AMP + H2O = 1-(5-phospho-beta-D-ribosyl)-5-[(5-phospho-beta-D-ribosylamino)methylideneamino]imidazole-4-carboxamide. Its pathway is amino-acid biosynthesis; L-histidine biosynthesis; L-histidine from 5-phospho-alpha-D-ribose 1-diphosphate: step 2/9. It functions in the pathway amino-acid biosynthesis; L-histidine biosynthesis; L-histidine from 5-phospho-alpha-D-ribose 1-diphosphate: step 3/9. This Gloeobacter violaceus (strain ATCC 29082 / PCC 7421) protein is Histidine biosynthesis bifunctional protein HisIE.